The chain runs to 181 residues: Protein GrpE (181 aa).

This sequence belongs to the GrpE family. Homodimer.

The protein resides in the cytoplasm. Functionally, participates actively in the response to hyperosmotic and heat shock by preventing the aggregation of stress-denatured proteins, in association with DnaK and GrpE. It is the nucleotide exchange factor for DnaK and may function as a thermosensor. Unfolded proteins bind initially to DnaJ; upon interaction with the DnaJ-bound protein, DnaK hydrolyzes its bound ATP, resulting in the formation of a stable complex. GrpE releases ADP from DnaK; ATP binding to DnaK triggers the release of the substrate protein, thus completing the reaction cycle. Several rounds of ATP-dependent interactions between DnaJ, DnaK and GrpE are required for fully efficient folding. The chain is Protein GrpE from Delftia acidovorans (strain DSM 14801 / SPH-1).